A 549-amino-acid polypeptide reads, in one-letter code: Pyrophosphate--fructose 6-phosphate 1-phosphotransferase (549 aa).

Diphosphate is bound at residue Gly78. Residue Asp172 coordinates Mg(2+). Residues 200–202, 239–240, 247–249, Glu308, and 421–424 each bind substrate; these read TID, KY, MGR, and YEGR. Asp202 (proton acceptor) is an active-site residue.

It belongs to the phosphofructokinase type A (PFKA) family. PPi-dependent PFK group II subfamily. Clade 'Long' sub-subfamily. In terms of assembly, homodimer. Mg(2+) serves as cofactor.

It localises to the cytoplasm. It carries out the reaction beta-D-fructose 6-phosphate + diphosphate = beta-D-fructose 1,6-bisphosphate + phosphate + H(+). Its pathway is carbohydrate degradation; glycolysis; D-glyceraldehyde 3-phosphate and glycerone phosphate from D-glucose: step 3/4. With respect to regulation, non-allosteric. Functionally, catalyzes the phosphorylation of D-fructose 6-phosphate, the first committing step of glycolysis. Uses inorganic phosphate (PPi) as phosphoryl donor instead of ATP like common ATP-dependent phosphofructokinases (ATP-PFKs), which renders the reaction reversible, and can thus function both in glycolysis and gluconeogenesis. Consistently, PPi-PFK can replace the enzymes of both the forward (ATP-PFK) and reverse (fructose-bisphosphatase (FBPase)) reactions. The polypeptide is Pyrophosphate--fructose 6-phosphate 1-phosphotransferase (Porphyromonas gingivalis (Bacteroides gingivalis)).